The primary structure comprises 122 residues: MQNRIEILNATLSDDQLRLACQTEGNEAERKPSGQMLVDSDHFAFVYILELADSFEYVIIKEHVWPELKQAHAQKIPVVLEAGDQTIELAGLHEELEYLLENIKDNANYGEEMEEKVKRVFL.

This sequence belongs to the UPF0738 family.

This is UPF0738 protein YjbL (yjbL) from Bacillus subtilis (strain 168).